A 164-amino-acid polypeptide reads, in one-letter code: Prolyl-tRNA editing protein ProX (164 aa).

It belongs to the PRORSD1 family.

Its subcellular location is the cytoplasm. Functionally, functions in trans to edit the amino acid moiety from incorrectly charged Ala-tRNA(Pro). Has weak activity on correctly charged tRNA(Ala), tRNA(Gly) as well as tRNA(Cys), tRNA(Met), tRNA(Pro), tRNA(Ser) and tRNA(Leu). The protein is Prolyl-tRNA editing protein ProX (proX) of Acetoanaerobium sticklandii (strain ATCC 12662 / DSM 519 / JCM 1433 / CCUG 9281 / NCIMB 10654 / HF) (Clostridium sticklandii).